A 356-amino-acid chain; its full sequence is Pyrimidine monooxygenase RutA (356 aa).

Residues 49-50 (IK), N115, E124, 140-141 (RY), and S190 contribute to the FMN site.

Belongs to the NtaA/SnaA/DszA monooxygenase family. RutA subfamily.

The catalysed reaction is uracil + FMNH2 + NADH + O2 = (Z)-3-ureidoacrylate + FMN + NAD(+) + H2O + H(+). It carries out the reaction thymine + FMNH2 + NADH + O2 = (Z)-2-methylureidoacrylate + FMN + NAD(+) + H2O + H(+). Its function is as follows. Catalyzes the pyrimidine ring opening between N-3 and C-4 by an unusual flavin hydroperoxide-catalyzed mechanism, adding oxygen atoms in the process to yield ureidoacrylate peracid, that immediately reacts with FMN forming ureidoacrylate and FMN-N(5)-oxide. The FMN-N(5)-oxide reacts spontaneously with NADH to produce FMN. Requires the flavin reductase RutF to regenerate FMN in vivo. The protein is Pyrimidine monooxygenase RutA of Haliangium ochraceum (strain DSM 14365 / JCM 11303 / SMP-2).